The primary structure comprises 369 residues: Serine/threonine-protein acetyltransferase HopZ1a (369 aa).

The tract at residues 1–46 (MGNVCVGGSRMSHQVYSPDRADTPPRSERNTPDRRQRAAGDAERTQ) is disordered. Over residues 19 to 46 (DRADTPPRSERNTPDRRQRAAGDAERTQ) the composition is skewed to basic and acidic residues. 1D-myo-inositol hexakisphosphate-binding residues include Arg-49, Lys-53, and Arg-106. Residues His-150 and Glu-170 contribute to the active site. His-150 is a binding site for CoA. CoA contacts are provided by residues Ala-177 and 211–212 (KT). The active site involves Cys-216. 1D-myo-inositol hexakisphosphate is bound by residues Asn-222, 226–229 (KAHK), and 289–290 (KH). Position 289 is an N6-acetyllysine; by autocatalysis (Lys-289). 292–295 (ASLT) contacts CoA. Residues 314 to 317 (SEGH) and Arg-326 each bind 1D-myo-inositol hexakisphosphate. CoA contacts are provided by residues 331 to 334 (RVKR) and 344 to 348 (SNTQF). 1D-myo-inositol hexakisphosphate-binding residues include Gln-358 and Arg-362.

Belongs to the acetyltransferase YopJ family. As to quaternary structure, interacts with host plant JAZ proteins (e.g. Glycine max JAZ1 and Arabidospis thaliana TIFY10B/JAZ2, TIFY11A/JAZ5, TIFY11B/JAZ6, TIFY5A/JAZ8 and TIFY3B/JAZ12) and triggers their degradation. Binds directly to SZE1 and SZE2 at the host plasma membrane; this interaction with a complex made of, at least, SZE1, BKN2/SZE2, ZAR1 and ZED1 triggers host immunity. It depends on 1D-myo-inositol hexakisphosphate as a cofactor. In terms of processing, autoacetylated at Lys-289; while autoacetylation at Lys-289 is required for virulence function to some extent, it is not essential.

The protein resides in the secreted. The protein localises to the host cell membrane. It localises to the host cytoplasm. Its subcellular location is the host cytoskeleton. It is found in the host nucleus. It carries out the reaction L-threonyl-[protein] + acetyl-CoA = O-acetyl-L-threonyl-[protein] + CoA. The enzyme catalyses L-seryl-[protein] + acetyl-CoA = O-acetyl-L-seryl-[protein] + CoA. It catalyses the reaction L-lysyl-[protein] + acetyl-CoA = N(6)-acetyl-L-lysyl-[protein] + CoA + H(+). Its activity is regulated as follows. 1D-myo-inositol hexakisphosphate activates protein-acetyltransferase activity via an allosteric mechanism: 1D-myo-inositol hexakisphosphate-binding induces a conformational rearrangement that stimulates the interaction with acetyl-CoA. Acetyltransferase activity is activated by phytic acid. Serine/threonine-protein acetyltransferase translocated into infected cells, which impairs host microtubule network and host immunity by mediating acetylation of target proteins. Blocks secretion in host cells by mediating acetylation of host tubulin, thereby impairing host microbubule network. Impairs host cell immunity by mediating acetylation of host TIFY/JAZ transcription repressors (Arabidopsis thaliana TIFY10B/JAZ2, TIFY11A/JAZ5, TIFY11B/JAZ6, TIFY5A/JAZ8, TIFY9/JAZ10 and TIFY3B/JAZ12), thereby activating host jasmonate signaling. The protein is Serine/threonine-protein acetyltransferase HopZ1a of Pseudomonas syringae pv. syringae.